The chain runs to 446 residues: Phosphoglucosamine mutase (446 aa).

The active-site Phosphoserine intermediate is the S102. Residues S102, D241, D243, and D245 each contribute to the Mg(2+) site. The residue at position 102 (S102) is a Phosphoserine.

This sequence belongs to the phosphohexose mutase family. Mg(2+) serves as cofactor. In terms of processing, activated by phosphorylation.

The catalysed reaction is alpha-D-glucosamine 1-phosphate = D-glucosamine 6-phosphate. In terms of biological role, catalyzes the conversion of glucosamine-6-phosphate to glucosamine-1-phosphate. In Xylella fastidiosa (strain M12), this protein is Phosphoglucosamine mutase.